A 511-amino-acid polypeptide reads, in one-letter code: DEP domain-containing protein 7 (511 aa).

The DEP domain maps to 46-136 (LQTQVEVKKR…SSCSLYRFTT (91 aa)).

It belongs to the DEPDC7 family.

This Rattus norvegicus (Rat) protein is DEP domain-containing protein 7 (Depdc7).